The sequence spans 472 residues: MSKKSVGKIVRIIGPVVDVKFQEGDLPDIYDALVVINPQTGKKLILEVEQLIGDNIVRTVAMDSTDGLVRGLEVENTGEPIKAPVGRGVLGRMFNVIGEPIDEQGELKDIEYWPIHRPAPSMTEQKTEIEILETGLKVIDLLAPFPKGGKIGFFGGAGVGKTVLVMEMIRNIAIEHHGFSIFAGVGERTREGNDLYLEMTEAGVLNNTVLVFGQMNEPPGARFRVALTALTIAEYFRDVEGRDVLLFIDNIFRFVQAGSEVSALLGRMPSAVGYQPTLSTDMGELQERITSTKKGSITSVQAIYVPADDITDPAPATTFTHLDATIVLSRQLAALGLYPAVDPLDSTSKILDPNIVGKEHYEVARGVQEVLQRYKDLQDIIAILGMEELSEEDKLIVQRARKIQRFLTQPTHVAERFSGIPGVYVPIKETIRGFKEILEGRYDDLPEAAFYMVGTIDEAVEKAKKLMKSAVI.

155-162 (GGAGVGKT) contributes to the ATP binding site.

It belongs to the ATPase alpha/beta chains family. As to quaternary structure, F-type ATPases have 2 components, CF(1) - the catalytic core - and CF(0) - the membrane proton channel. CF(1) has five subunits: alpha(3), beta(3), gamma(1), delta(1), epsilon(1). CF(0) has three main subunits: a(1), b(2) and c(9-12). The alpha and beta chains form an alternating ring which encloses part of the gamma chain. CF(1) is attached to CF(0) by a central stalk formed by the gamma and epsilon chains, while a peripheral stalk is formed by the delta and b chains.

It localises to the cell membrane. The enzyme catalyses ATP + H2O + 4 H(+)(in) = ADP + phosphate + 5 H(+)(out). Its function is as follows. Produces ATP from ADP in the presence of a proton gradient across the membrane. The catalytic sites are hosted primarily by the beta subunits. The protein is ATP synthase subunit beta of Fervidobacterium islandicum.